The following is a 211-amino-acid chain: ATP-dependent Clp protease proteolytic subunit (211 aa).

Catalysis depends on Ser114, which acts as the Nucleophile. His139 is an active-site residue.

It belongs to the peptidase S14 family. Fourteen ClpP subunits assemble into 2 heptameric rings which stack back to back to give a disk-like structure with a central cavity, resembling the structure of eukaryotic proteasomes.

The protein resides in the cytoplasm. The enzyme catalyses Hydrolysis of proteins to small peptides in the presence of ATP and magnesium. alpha-casein is the usual test substrate. In the absence of ATP, only oligopeptides shorter than five residues are hydrolyzed (such as succinyl-Leu-Tyr-|-NHMec, and Leu-Tyr-Leu-|-Tyr-Trp, in which cleavage of the -Tyr-|-Leu- and -Tyr-|-Trp bonds also occurs).. Cleaves peptides in various proteins in a process that requires ATP hydrolysis. Has a chymotrypsin-like activity. Plays a major role in the degradation of misfolded proteins. This chain is ATP-dependent Clp protease proteolytic subunit, found in Pseudomonas fluorescens (strain Pf0-1).